Reading from the N-terminus, the 86-residue chain is Omega-theraphotoxin-Hhn1a 1 (86 aa).

The N-terminal stretch at 1–21 (MKSIVFVALFGLALLAVVCSA) is a signal peptide. The propeptide occupies 22-50 (SEDAHKELLKEVVRAMVVDKTDAVQAEER). 3 cysteine pairs are disulfide-bonded: Cys52-Cys66, Cys59-Cys71, and Cys65-Cys78.

The protein belongs to the neurotoxin 10 (Hwtx-1) family. 17 (Hntx-9) subfamily. Expressed by the venom gland.

The protein resides in the secreted. Its function is as follows. Ion channel inhibitor. This chain is Omega-theraphotoxin-Hhn1a 1, found in Cyriopagopus hainanus (Chinese bird spider).